We begin with the raw amino-acid sequence, 414 residues long: CinA-like protein (414 aa).

Belongs to the CinA family.

The sequence is that of CinA-like protein from Citrifermentans bemidjiense (strain ATCC BAA-1014 / DSM 16622 / JCM 12645 / Bem) (Geobacter bemidjiensis).